Reading from the N-terminus, the 420-residue chain is Pyridinium-3,5-bisthiocarboxylic acid mononucleotide nickel insertion protein (420 aa).

The tract at residues N81–H104 is disordered. A compositionally biased stretch (basic and acidic residues) spans E90–S99.

The protein belongs to the LarC family.

The enzyme catalyses Ni(II)-pyridinium-3,5-bisthiocarboxylate mononucleotide = pyridinium-3,5-bisthiocarboxylate mononucleotide + Ni(2+). Its function is as follows. Involved in the biosynthesis of a nickel-pincer cofactor ((SCS)Ni(II) pincer complex). Binds Ni(2+), and functions in nickel delivery to pyridinium-3,5-bisthiocarboxylic acid mononucleotide (P2TMN), to form the mature cofactor. Is thus probably required for the activation of nickel-pincer cofactor-dependent enzymes. The sequence is that of Pyridinium-3,5-bisthiocarboxylic acid mononucleotide nickel insertion protein from Clostridium acetobutylicum (strain ATCC 824 / DSM 792 / JCM 1419 / IAM 19013 / LMG 5710 / NBRC 13948 / NRRL B-527 / VKM B-1787 / 2291 / W).